An 81-amino-acid polypeptide reads, in one-letter code: Defensin-like protein 313 (81 aa).

The N-terminal stretch at 1 to 32 is a signal peptide; sequence MESKRSSSSPLLILITTIMIIFIISGPKSVDA. Disulfide bonds link Cys-34–Cys-63, Cys-45–Cys-74, and Cys-49–Cys-76.

The protein belongs to the DEFL family.

The protein resides in the secreted. This chain is Defensin-like protein 313, found in Arabidopsis thaliana (Mouse-ear cress).